The primary structure comprises 526 residues: Protein ERGIC-53-like (526 aa).

The N-terminal stretch at 1 to 25 is a signal peptide; the sequence is MPAVSGPGPLFCLLLLLLDPHSPET. The Lumenal segment spans residues 26-462; it reads GCPPLRRFEY…QPPRASSCLQ (437 aa). The L-type lectin-like domain occupies 31–252; that stretch reads RRFEYKLSFK…DVLSFLTFSL (222 aa). Asparagine 75 carries N-linked (GlcNAc...) asparagine glycosylation. The cysteines at positions 176 and 215 are disulfide-linked. The chain crosses the membrane as a helical span at residues 463–483; sequence PGIFLFYLLIQTVGFFGYVHF. Topologically, residues 484–526 are cytoplasmic; the sequence is RQELNKSLQECLSTGSLPLGPAPHTPRALGILRRQPLPASMPA.

In terms of tissue distribution, highly expressed in normal and neoplastic prostate. Also expressed in cardiac atrium, salivary gland, spleen and selective cells in the CNS.

The protein localises to the endoplasmic reticulum-Golgi intermediate compartment membrane. The polypeptide is Protein ERGIC-53-like (LMAN1L) (Homo sapiens (Human)).